Here is a 565-residue protein sequence, read N- to C-terminus: uncharacterized protein (565 aa).

5 helical membrane-spanning segments follow: residues 4–26 (FVQFLGSNPYILLFLTIGLAVWV), 33–55 (GYGLGAVAAAIVVGCLVATVGAA), 68–90 (SLLYYLFMYGVGLRVGPSFVNAL), 97–119 (YAILAIIAPILGLAIVVLGTQFF), and 162–184 (ISAMIALSYGITYIWGTVGIILL). RCK C-terminal domains lie at 210 to 295 (PNVD…LGPE) and 296 to 379 (VPDA…IFGV). 5 consecutive transmembrane segments (helical) span residues 389–411 (LLTLSFGMILGFLIGLIEVPAFG), 415–432 (GLGNAGGLLLSGIIVSSI), 453–472 (LGLIGFVAIVGINAGADLLT), 482–504 (IFIVGFLASTIPPIIVWAIGFHI), and 539–561 (WLGFPVGYAVSGVLLTVFGYFAM).

The protein belongs to the AAE transporter (TC 2.A.81) family.

The protein localises to the cell membrane. This is an uncharacterized protein from Bordetella bronchiseptica (strain ATCC BAA-588 / NCTC 13252 / RB50) (Alcaligenes bronchisepticus).